The following is a 229-amino-acid chain: Ribonuclease T (229 aa).

Positions 23 to 197 (VIIDVETAGF…YDTERTAKLF (175 aa)) constitute an Exonuclease domain. The Mg(2+) site is built by D26, E28, H184, and D189. H184 serves as the catalytic Proton donor/acceptor.

It belongs to the RNase T family. As to quaternary structure, homodimer. The cofactor is Mg(2+).

Its function is as follows. Trims short 3' overhangs of a variety of RNA species, leaving a one or two nucleotide 3' overhang. Responsible for the end-turnover of tRNA: specifically removes the terminal AMP residue from uncharged tRNA (tRNA-C-C-A). Also appears to be involved in tRNA biosynthesis. This Haemophilus influenzae (strain ATCC 51907 / DSM 11121 / KW20 / Rd) protein is Ribonuclease T.